Here is a 904-residue protein sequence, read N- to C-terminus: DNA replication licensing factor MCM2 (904 aa).

The span at 1–15 shows a compositional bias: polar residues; sequence MAESSESFTMASSPA. The segment at 1-80 is disordered; that stretch reads MAESSESFTM…ELIGDGMERD (80 aa). An N-acetylalanine modification is found at alanine 2. Positions 2–257 are interaction with KAT7; that stretch reads AESSESFTMA…LPEAPAELLQ (256 aa). Residues serine 12 and serine 13 each carry the phosphoserine modification. Phosphothreonine is present on threonine 25. 3 positions are modified to phosphoserine: serine 26, serine 27, and serine 32. Threonine 39 is modified (phosphothreonine). Serine 40 bears the Phosphoserine; by CDC7 mark. Serine 41 is subject to Phosphoserine. Serine 53 bears the Phosphoserine; by CDC7 mark. Threonine 59 is modified (phosphothreonine). Residues 61–130 form an interaction with DNJC9 region; it reads GPLEEEEDGE…DREAGRGLGR (70 aa). The segment covering 62 to 73 has biased composition (acidic residues); the sequence is PLEEEEDGEELI. Position 108 is a phosphoserine; by ATR (serine 108). The interval 109–167 is disordered; the sequence is QREAAERAMRQRDREAGRGLGRMRRGLLYDSDEEDEERPARKRRQVERATEDGEEDEEM. The segment covering 111–125 has biased composition (basic and acidic residues); the sequence is EAAERAMRQRDREAG. Residue tyrosine 137 is modified to Phosphotyrosine. Serine 139 carries the phosphoserine modification. Lysine 178 is covalently cross-linked (Glycyl lysine isopeptide (Lys-Gly) (interchain with G-Cter in SUMO2)). Position 216 is an N6-acetyllysine (lysine 216). The segment at 329 to 355 adopts a C4-type zinc-finger fold; it reads CNKCNFVLGPFCQSQNQEVKPGSCPEC. 2 positions are modified to phosphoserine: serine 381 and serine 484. Residues 473–679 form the MCM domain; the sequence is IGEKIFASIA…VQDEMLARFV (207 aa). ADP contacts are provided by serine 530 and glutamine 531. An Arginine finger motif is present at residues 655–658; the sequence is SRFD. A disordered region spans residues 686-705; it reads HHPSNKEEEGLANGSAAEPA.

The protein belongs to the MCM family. Component of the MCM2-7 complex. The complex forms a toroidal hexameric ring with the proposed subunit order MCM2-MCM6-MCM4-MCM7-MCM3-MCM5. Component of the CMG helicase complex, a hexameric ring of related MCM2-7 subunits stabilized by CDC45 and the tetrameric GINS complex. Interacts with DBF4. Interacts with KAT7. May interact with MCM10. Component of the replisome complex composed of at least DONSON, MCM2, MCM7, PCNA and TICRR. Forms a co-chaperone complex with DNAJC9 and histone H3.3-H4 heterodimers. Within the complex, interacts (via N-terminus) with DNAJC9 (via C-terminus); the interaction is histone-dependent. Interacts with histones H3.1 and H3.3. Interacts with AGER/RAGE; the interaction is increased following DNA replication stress and stabilizes the MCM2-7 complex at replication forks. Phosphorylated on Ser-108 by ATR in proliferating cells. Ser-108 proliferation is increased by genotoxic agents. Ser-40 is mediated by the CDC7-DBF4 and CDC7-DBF4B complexes, while Ser-53 phosphorylation is only mediated by the CDC7-DBF4 complex. Phosphorylation by the CDC7-DBF4 complex during G1/S phase is required for the initiation of DNA replication.

It is found in the nucleus. Its subcellular location is the chromosome. It carries out the reaction ATP + H2O = ADP + phosphate + H(+). In terms of biological role, acts as a component of the MCM2-7 complex (MCM complex) which is the replicative helicase essential for 'once per cell cycle' DNA replication initiation and elongation in eukaryotic cells. Core component of CDC45-MCM-GINS (CMG) helicase, the molecular machine that unwinds template DNA during replication, and around which the replisome is built. The active ATPase sites in the MCM2-7 ring are formed through the interaction surfaces of two neighboring subunits such that a critical structure of a conserved arginine finger motif is provided in trans relative to the ATP-binding site of the Walker A box of the adjacent subunit. The six ATPase active sites, however, are likely to contribute differentially to the complex helicase activity. Required for the entry in S phase and for cell division. Plays a role in terminally differentiated hair cells development of the cochlea and induces cells apoptosis. The protein is DNA replication licensing factor MCM2 of Homo sapiens (Human).